Consider the following 96-residue polypeptide: Cysteine protease immunity 1 (96 aa).

This is Cysteine protease immunity 1 from Escherichia coli O1:K1:H7 (strain ATCC 11775 / DSM 30083 / JCM 1649 / NBRC 102203 / NCTC 9001 / U5/41).